The following is a 1095-amino-acid chain: Mediator of RNA polymerase II transcription subunit 15 (1095 aa).

The span at 66–83 shows a compositional bias: basic and acidic residues; that stretch reads KSKIDAMRSTRDKRKRES. 6 disordered regions span residues 66-197, 265-323, 448-508, 633-672, 737-847, and 1050-1075; these read KSKI…LTQQ, QQQQ…RNPN, SAAD…LNPT, QQQQ…KNQT, PTMA…QPGN, and SEAA…SMAG. Composition is skewed to low complexity over residues 99 to 113 and 133 to 154; these read NNNN…NNLN and NSNA…PNGN. Residues 155 to 165 are compositionally biased toward polar residues; it reads DGTANPQMFMN. Residues 166-178 are compositionally biased toward low complexity; the sequence is QQAQARQQAAARQ. Residues 448 to 473 are compositionally biased toward polar residues; sequence SAADSTMNNSNQPMNIGNNGVNMIPN. 3 stretches are compositionally biased toward low complexity: residues 487–500, 633–662, and 780–793; these read QTPQ…QSNR, QQQQ…MQQA, and PTPQ…PSTT. 3 stretches are compositionally biased toward polar residues: residues 794–810, 817–847, and 1050–1062; these read NLSA…SATP, PKST…QPGN, and SEAA…SSLM.

This sequence belongs to the Mediator complex subunit 15 family. As to quaternary structure, component of the Mediator complex.

The protein resides in the nucleus. Component of the Mediator complex, a coactivator involved in regulated gene transcription of nearly all RNA polymerase II-dependent genes. Mediator functions as a bridge to convey information from gene-specific regulatory proteins to the basal RNA polymerase II transcription machinery. Mediator is recruited to promoters by direct interactions with regulatory proteins and serves as a scaffold for the assembly of a functional preinitiation complex with RNA polymerase II and the general transcription factors. This Candida glabrata (strain ATCC 2001 / BCRC 20586 / JCM 3761 / NBRC 0622 / NRRL Y-65 / CBS 138) (Yeast) protein is Mediator of RNA polymerase II transcription subunit 15 (GAL11).